The following is a 165-amino-acid chain: Regulator of ribonuclease activity A (165 aa).

It belongs to the RraA family. As to quaternary structure, homotrimer. Binds to both RNA-binding sites in the C-terminal region of Rne and to RhlB.

The protein localises to the cytoplasm. Its function is as follows. Globally modulates RNA abundance by binding to RNase E (Rne) and regulating its endonucleolytic activity. Can modulate Rne action in a substrate-dependent manner by altering the composition of the degradosome. Modulates RNA-binding and helicase activities of the degradosome. The chain is Regulator of ribonuclease activity A from Haemophilus ducreyi (strain 35000HP / ATCC 700724).